The chain runs to 831 residues: MTISRRDLLKAQAAGIAAMAANIPLSSQAPAVPGGVESLQITWSKAPCRFCGTGCGVMVGVKEGRVVATHGDLLAEVNRGLNCVKGYFLSKIMYGADRLTQPLLRKKDGVYAKDGEFTPVSWEEAFDTMAAQAKRVLRDKGPTALGMFGSGQWTIFEGYAATKLMRAGFRSNNLDPNARHCMASAAYAFMRTFGMDEPMGCYDDFEAADAFVLWGSNMAEMHPILWTRVADRRLGHPHVKVAVLSTFTHRSSDLADIPIVFKPGTDLAILNYIANHIIQTGRVNRDFVDRHTTFVAGATGIGYGLRDDDPREMAARTAEDPAATTPSTFEEFAELVSEYTLDKVSELSGVEPAFLEQLAELYADPDRKVMSLWTMGFNQHVRGVWANQMVYNLHLLTGKISEPGNSPFSLTGQASACGTARQVGTFRHRLPSDMTVTNPERRQDAEEIWRIPHGVIPEQPGLHAVAQDRALHDGTLNFYWIQVNNNLQASPNNDGEAWPGYRNPDNFIVVSDAYPTVTALAADLILPAAMWVEKEGAYGNAERRTHVWHQLVEAPGEARSDLWQMMEFSTRFTTDEVWPEEILAANPNYRGQSLFDVLFRNGSVDRFDLSELNPVTPTAESNAFGFYVQKGLFEEYAPFGRGHGHDLAPYDTYHEVRGLRWPVVDGKETLWRYREGLDPYVEPGAGVQFYGNPDGKARIIAVPYEPPAEPPDEEYNIWLVTGRVLEHWHSGSMTMRVPELYRAFPGARCFMNPEDARDMGFNQGAEVRIVSRRGEIRSRVETRGRNRMPRGVVFVPWFDASQLINKVTLDATDPISKQTDFKKCAVKILPV.

Residues 1-31 (MTISRRDLLKAQAAGIAAMAANIPLSSQAPA) constitute a signal peptide (tat-type signal). The 57-residue stretch at 41–97 (ITWSKAPCRFCGTGCGVMVGVKEGRVVATHGDLLAEVNRGLNCVKGYFLSKIMYGAD) folds into the 4Fe-4S Mo/W bis-MGD-type domain. Residues Cys48, Cys51, Cys55, and Cys83 each coordinate [4Fe-4S] cluster. Residues Lys85, Gln152, Asn177, Cys181, 214-221 (WGSNMAEM), 245-249 (STFTH), 264-266 (GTD), Met375, Gln379, Asn485, 511-512 (SD), Lys534, Asp561, and 721-730 (TGRVLEHWHS) contribute to the Mo-bis(molybdopterin guanine dinucleotide) site. Position 797 (Trp797) interacts with substrate. Positions 805 and 822 each coordinate Mo-bis(molybdopterin guanine dinucleotide).

Belongs to the prokaryotic molybdopterin-containing oxidoreductase family. NasA/NapA/NarB subfamily. Component of the periplasmic nitrate reductase NapAB complex composed of NapA and NapB. Requires [4Fe-4S] cluster as cofactor. The cofactor is Mo-bis(molybdopterin guanine dinucleotide). In terms of processing, predicted to be exported by the Tat system. The position of the signal peptide cleavage has not been experimentally proven.

The protein localises to the periplasm. It catalyses the reaction 2 Fe(II)-[cytochrome] + nitrate + 2 H(+) = 2 Fe(III)-[cytochrome] + nitrite + H2O. In terms of biological role, catalytic subunit of the periplasmic nitrate reductase complex NapAB. Receives electrons from NapB and catalyzes the reduction of nitrate to nitrite. This Paracoccus pantotrophus (Thiosphaera pantotropha) protein is Periplasmic nitrate reductase.